The primary structure comprises 344 residues: Polyhomeotic-like protein 2 (344 aa).

The span at 1-23 shows a compositional bias: polar residues; it reads MTSGNGSSPVPTAATGNRTQNGE. The segment at 1–28 is disordered; it reads MTSGNGSSPVPTAATGNRTQNGENKPPQ. The HD1 signature appears at 25–53; sequence KPPQAVVKPQILTHFIEGFVIQEGAQPFP. An FCS-type zinc finger spans residues 114-148; it reads GDGDPPKLKCELCGRVDFEYKFKRSKRFCSMACAK. C123, C126, C142, and C146 together coordinate Zn(2+). The disordered stretch occupies residues 165-269; that stretch reads RSKLQKPTVA…LHSRDPIAMS (105 aa). Positions 173 to 183 are enriched in basic residues; it reads VAKHARRRSRK. The segment covering 216 to 233 has biased composition (polar residues); it reads KLSNSQEDSSRCSDNSSY. Residues 234-248 are compositionally biased toward low complexity; the sequence is EEPLSPMSASSSLSR. Positions 280–344 constitute an SAM domain; sequence WNVEDVYDFV…YARISMLKDS (65 aa).

In terms of assembly, component of a PRC1-like complex.

Its subcellular location is the nucleus. Functionally, component of a Polycomb group (PcG) multiprotein PRC1-like complex, a complex class required to maintain the transcriptionally repressive state of many genes, including Hox genes, throughout development. PcG PRC1 complex acts via chromatin remodeling and modification of histones; it mediates monoubiquitination of histone H2A 'Lys-119', rendering chromatin heritably changed in its expressibility. The polypeptide is Polyhomeotic-like protein 2 (phc2) (Xenopus laevis (African clawed frog)).